A 378-amino-acid polypeptide reads, in one-letter code: Probable selenide, water dikinase (378 aa).

C33 is a catalytic residue. Residues K36, 63–65, D83, D106, and 158–160 contribute to the ATP site; these read GLD and GQT. D65 lines the Mg(2+) pocket. D106 serves as a coordination point for Mg(2+). Position 260 (D260) interacts with Mg(2+).

Belongs to the selenophosphate synthase 1 family. Class I subfamily. Homodimer. Mg(2+) is required as a cofactor.

It carries out the reaction hydrogenselenide + ATP + H2O = selenophosphate + AMP + phosphate + 2 H(+). In terms of biological role, synthesizes selenophosphate from selenide and ATP. The polypeptide is Probable selenide, water dikinase (seld-1) (Caenorhabditis elegans).